The sequence spans 373 residues: Superinfection exclusion protein (373 aa).

Residues 1-15 (MIVLLILSLACTAFT) form the signal peptide.

It belongs to the serpin family. Orthopoxvirus OPG040 subfamily. As to quaternary structure, interacts with A56 protein.

The protein localises to the virion membrane. The protein resides in the host cell membrane. Functionally, prevents cell to cell fusion via its interaction with A56 protein. The A56-K2 complex associates with components of the entry fusion complex (EFC) presumably to avoid superinfection and syncytium formation. The chain is Superinfection exclusion protein (OPG040) from Homo sapiens (Human).